A 420-amino-acid polypeptide reads, in one-letter code: Gamma-glutamyl phosphate reductase (420 aa).

It belongs to the gamma-glutamyl phosphate reductase family.

It localises to the cytoplasm. The catalysed reaction is L-glutamate 5-semialdehyde + phosphate + NADP(+) = L-glutamyl 5-phosphate + NADPH + H(+). The protein operates within amino-acid biosynthesis; L-proline biosynthesis; L-glutamate 5-semialdehyde from L-glutamate: step 2/2. In terms of biological role, catalyzes the NADPH-dependent reduction of L-glutamate 5-phosphate into L-glutamate 5-semialdehyde and phosphate. The product spontaneously undergoes cyclization to form 1-pyrroline-5-carboxylate. In Streptococcus gordonii (strain Challis / ATCC 35105 / BCRC 15272 / CH1 / DL1 / V288), this protein is Gamma-glutamyl phosphate reductase.